Here is a 177-residue protein sequence, read N- to C-terminus: uncharacterized protein (177 aa).

The interval 122-177 (LPFTRNGSGQQSNKLRDPKKGRTHKPKPSEKHKKNKTGKKGAQEKTHRSRSSRKGN) is disordered. Composition is skewed to basic residues over residues 142-160 (GRTH…KTGK) and 168-177 (HRSRSSRKGN).

This is an uncharacterized protein from Saccharomyces cerevisiae (strain ATCC 204508 / S288c) (Baker's yeast).